Consider the following 417-residue polypeptide: Guanine nucleotide-exchange factor SEC12 (417 aa).

Residues 1–388 lie on the Cytoplasmic side of the membrane; that stretch reads MGRRRGVELY…QLHLLPSRRS (388 aa). Tyrosine 10 bears the 3'-nitrotyrosine mark. Residues 101–135 form a disordered region; that stretch reads KGSKAEKSGSKEQGPRQRKGAAPAEKKSGAEVHPE. Basic and acidic residues-rich tracts occupy residues 103–115 and 124–135; these read SKAEKSGSKEQGP and AEKKSGAEVHPE. WD repeat units follow at residues 152–191, 194–232, and 298–337; these read STEPLQKVVCFNHDNTLLATGGSDGHVRVWKVPSLEKVLE, AHEGEIGDLALGPDGKLVTVGWDFKASVWQKDQLVTQLQ, and CGHEVISCLTVSESGTFLGLGTVTGSVAIYIAFSLQRLYY. A helical transmembrane segment spans residues 389–409; it reads VPVWLLLLLCVGLIIVTILLL. The Lumenal portion of the chain corresponds to 410–417; sequence QSAFPGFL.

In terms of assembly, interacts with SAR1B (GDP-bound form). Interacts with MIA2; recruits PREB to endoplasmic reticulum exit sites. Interacts with CIDEB; facilitating loading of SCAP-SREBP into COPII vesicles.

The protein localises to the endoplasmic reticulum membrane. It localises to the nucleus. Functionally, guanine nucleotide exchange factor (GEF) that regulates the assembly of the coat protein complex II/COPII in endoplasmic reticulum (ER) to Golgi vesicle-mediated transport. Selectively activates SAR1A and SAR1B by promoting the exchange of guanosine diphosphate (GDP) for guanosine triphosphate (GTP) in these small GTPases. In their activated GTP-bound state, SAR1A and SAR1B insert into the membrane of the endoplasmic reticulum where they recruit the remainder of the coat protein complex II/COPII which is responsible for both the sorting of proteins and the deformation and budding of membranes into vesicles destined to the Golgi. Was first identified based on its probable role in the regulation of pituitary gene transcription. Binds to the prolactin gene (PRL) promoter and seems to activate transcription. The protein is Guanine nucleotide-exchange factor SEC12 of Rattus norvegicus (Rat).